The sequence spans 975 residues: Glycine dehydrogenase (decarboxylating) (975 aa).

An N6-(pyridoxal phosphate)lysine modification is found at K723.

The protein belongs to the GcvP family. The glycine cleavage system is composed of four proteins: P, T, L and H. It depends on pyridoxal 5'-phosphate as a cofactor.

It catalyses the reaction N(6)-[(R)-lipoyl]-L-lysyl-[glycine-cleavage complex H protein] + glycine + H(+) = N(6)-[(R)-S(8)-aminomethyldihydrolipoyl]-L-lysyl-[glycine-cleavage complex H protein] + CO2. Functionally, the glycine cleavage system catalyzes the degradation of glycine. The P protein binds the alpha-amino group of glycine through its pyridoxal phosphate cofactor; CO(2) is released and the remaining methylamine moiety is then transferred to the lipoamide cofactor of the H protein. The protein is Glycine dehydrogenase (decarboxylating) of Burkholderia ambifaria (strain MC40-6).